The sequence spans 228 residues: Ion-translocating oxidoreductase complex subunit E (228 aa).

The next 5 helical transmembrane spans lie at 24–44 (LLGL…LGLG), 73–93 (VFVL…NAFF), 95–115 (ELYL…AIIG), 130–150 (LADG…LGAL), and 184–204 (GFLL…LIAL).

It belongs to the NqrDE/RnfAE family. In terms of assembly, the complex is composed of six subunits: RnfA, RnfB, RnfC, RnfD, RnfE and RnfG.

The protein localises to the cell inner membrane. Functionally, part of a membrane-bound complex that couples electron transfer with translocation of ions across the membrane. In Thioalkalivibrio sulfidiphilus (strain HL-EbGR7), this protein is Ion-translocating oxidoreductase complex subunit E.